We begin with the raw amino-acid sequence, 80 residues long: Exodeoxyribonuclease 7 small subunit (80 aa).

It belongs to the XseB family. As to quaternary structure, heterooligomer composed of large and small subunits.

It localises to the cytoplasm. The catalysed reaction is Exonucleolytic cleavage in either 5'- to 3'- or 3'- to 5'-direction to yield nucleoside 5'-phosphates.. Bidirectionally degrades single-stranded DNA into large acid-insoluble oligonucleotides, which are then degraded further into small acid-soluble oligonucleotides. The sequence is that of Exodeoxyribonuclease 7 small subunit from Pseudomonas putida (strain W619).